Here is a 35-residue protein sequence, read N- to C-terminus: Mu/omega-theraphotoxin-Tap1a (35 aa).

3 disulfide bridges follow: cysteine 3–cysteine 18, cysteine 10–cysteine 23, and cysteine 17–cysteine 30.

Belongs to the neurotoxin 10 (Hwtx-1) family. 59 (Tltx) subfamily. Expressed by the venom gland.

The protein localises to the secreted. Its function is as follows. Gating-modifier toxin that inhibits both sodium (Nav) and calcium (Cav3) channels by inducing hyperpolarizing shift in voltage-dependence of activation and steady state inactivation. Inhibits Nav1.1/SCN1A, Nav1.2/SCN2A, Nav1.3/SCN3A, Nav1.6/SCN6A, Nav1.7/SCN9A and Cav3.1/CACNA1G sodium and calcium channels at nanomolar concentrations (IC(50)=81-301 nM). Surprisingly, selectively slows fast inactivation of Nav1.3/SCN3A. Also shows moderate inhibition of Cav3.2/CACNA1H calcium channels (IC(50)=1233 nM). Ex vivo, nearly ablates neuronal mechanosensitivity in afferent fibers innervating the colon and the bladder. In vivo, in a mouse model of irritable bowel syndrome, intracolonic administration of the toxin reverses colonic mechanical hypersensitivity. This Theraphosa apophysis (Goliath pinkfoot tarantula) protein is Mu/omega-theraphotoxin-Tap1a.